The chain runs to 776 residues: Protocadherin beta-16 (776 aa).

An N-terminal signal peptide occupies residues 1–28 (MEIGWMHNRRQRQVLVFFVLLSLSGAGA). Over 29–690 (ELGSYSVVEE…TQANSLTVYL (662 aa)) the chain is Extracellular. 5 Cadherin domains span residues 35-133 (VVEE…SPMF), 138-242 (MILK…APEF), 247-347 (YKVQ…PPQV), 352-451 (LTSP…APTF), and 456-561 (YTLF…SPFV). Residues N418 and N436 are each glycosylated (N-linked (GlcNAc...) asparagine). N567 is a glycosylation site (N-linked (GlcNAc...) asparagine). Residues 568 to 671 (GSAPCTELVP…LVDGFSQPFL (104 aa)) form the Cadherin 6 domain. The helical transmembrane segment at 691-711 (VVALASVSSLFLFSVLLFVAV) threads the bilayer. At 712–776 (RLCRRSRAAS…LKPIIPNFSP (65 aa)) the chain is on the cytoplasmic side.

It is found in the membrane. In terms of biological role, potential calcium-dependent cell-adhesion protein. May be involved in the establishment and maintenance of specific neuronal connections in the brain. This is Protocadherin beta-16 from Homo sapiens (Human).